Consider the following 224-residue polypeptide: Uracil phosphoribosyltransferase (224 aa).

Residue R92 participates in 5-phospho-alpha-D-ribose 1-diphosphate binding. A GTP-binding site is contributed by K109. 5-phospho-alpha-D-ribose 1-diphosphate contacts are provided by residues R117 and 145 to 153 (DPMLATGGT). Uracil is bound by residues I210 and 215–217 (GDA). D216 provides a ligand contact to 5-phospho-alpha-D-ribose 1-diphosphate.

It belongs to the UPRTase family. Mg(2+) is required as a cofactor.

The catalysed reaction is UMP + diphosphate = 5-phospho-alpha-D-ribose 1-diphosphate + uracil. The protein operates within pyrimidine metabolism; UMP biosynthesis via salvage pathway; UMP from uracil: step 1/1. Its activity is regulated as follows. Allosterically activated by GTP. Functionally, catalyzes the conversion of uracil and 5-phospho-alpha-D-ribose 1-diphosphate (PRPP) to UMP and diphosphate. This Nicotiana tabacum (Common tobacco) protein is Uracil phosphoribosyltransferase (UPP).